The sequence spans 252 residues: Ribosomal RNA small subunit methyltransferase J (252 aa).

S-adenosyl-L-methionine contacts are provided by residues 101 to 102 (RD), 117 to 118 (ER), 153 to 154 (SS), and Asp171.

The protein belongs to the methyltransferase superfamily. RsmJ family.

Its subcellular location is the cytoplasm. The catalysed reaction is guanosine(1516) in 16S rRNA + S-adenosyl-L-methionine = N(2)-methylguanosine(1516) in 16S rRNA + S-adenosyl-L-homocysteine + H(+). Functionally, specifically methylates the guanosine in position 1516 of 16S rRNA. In Salmonella paratyphi B (strain ATCC BAA-1250 / SPB7), this protein is Ribosomal RNA small subunit methyltransferase J.